An 886-amino-acid polypeptide reads, in one-letter code: Isoleucine--tRNA ligase (886 aa).

Positions 60 to 70 (PYANGDIHIGH) match the 'HIGH' region motif. E546 contributes to the L-isoleucyl-5'-AMP binding site. Positions 587 to 591 (KMSKS) match the 'KMSKS' region motif. An ATP-binding site is contributed by K590. Zn(2+) contacts are provided by C856, C859, C870, and C873.

The protein belongs to the class-I aminoacyl-tRNA synthetase family. IleS type 1 subfamily. In terms of assembly, monomer. It depends on Zn(2+) as a cofactor.

Its subcellular location is the cytoplasm. It carries out the reaction tRNA(Ile) + L-isoleucine + ATP = L-isoleucyl-tRNA(Ile) + AMP + diphosphate. Functionally, catalyzes the attachment of isoleucine to tRNA(Ile). As IleRS can inadvertently accommodate and process structurally similar amino acids such as valine, to avoid such errors it has two additional distinct tRNA(Ile)-dependent editing activities. One activity is designated as 'pretransfer' editing and involves the hydrolysis of activated Val-AMP. The other activity is designated 'posttransfer' editing and involves deacylation of mischarged Val-tRNA(Ile). The protein is Isoleucine--tRNA ligase of Mesomycoplasma hyopneumoniae (strain 232) (Mycoplasma hyopneumoniae).